We begin with the raw amino-acid sequence, 339 residues long: MIELFFEYIFPLIIIALKVVAITIPLILCVAYLTYAERRVIGLMQLRCGPNVVGPFGLLQPIADAVKLLFKEPIIPTNADKILFVLAPMITFILSLIGWAVIPFAKGVVLADINVGVLYILAISSLSVYGIIIAGWASNSKYAFLGAIRSSAQMISYEVSMGLVIITVLLTTGTLNLSQIVEAQRTMPWWIDLMLMPMGVVFFISVLAETNRLPFDLPEAESELVAGYNVEYSSMGFALFFLGEYANMILVSAMTTTFFLGGYLPPFNISWLDCIPGFFWFVFKVGFLLFCFLWIRATLPRYRYDQLMRLGWKVFLPLTLFWVVLVSSVLIYTDHLPNV.

8 helical membrane passes run 9–29, 82–102, 115–135, 161–181, 187–207, 235–255, 275–295, and 311–331; these read IFPL…LILC, ILFV…WAVI, VGVL…IIAG, MGLV…SQIV, MPWW…ISVL, MGFA…SAMT, IPGF…FLWI, and GWKV…SVLI.

This sequence belongs to the complex I subunit 1 family. In terms of assembly, NDH-1 is composed of 14 different subunits. Subunits NuoA, H, J, K, L, M, N constitute the membrane sector of the complex.

Its subcellular location is the cell inner membrane. The catalysed reaction is a quinone + NADH + 5 H(+)(in) = a quinol + NAD(+) + 4 H(+)(out). Functionally, NDH-1 shuttles electrons from NADH, via FMN and iron-sulfur (Fe-S) centers, to quinones in the respiratory chain. The immediate electron acceptor for the enzyme in this species is believed to be ubiquinone. Couples the redox reaction to proton translocation (for every two electrons transferred, four hydrogen ions are translocated across the cytoplasmic membrane), and thus conserves the redox energy in a proton gradient. This subunit may bind ubiquinone. The polypeptide is NADH-quinone oxidoreductase subunit H (Rickettsia bellii (strain OSU 85-389)).